A 150-amino-acid chain; its full sequence is Probable histone H2A.7 (150 aa).

Positions 1 to 12 are enriched in basic residues; sequence MESTGKVKKAFG. Disordered stretches follow at residues 1 to 27 and 129 to 150; these read MEST…SVSK and KSAT…PKKA. Serine 146 is modified (phosphoserine). The short motif at 146 to 149 is the SPKK motif element; sequence SPKK.

This sequence belongs to the histone H2A family. In terms of assembly, the nucleosome is a histone octamer containing two molecules each of H2A, H2B, H3 and H4 assembled in one H3-H4 heterotetramer and two H2A-H2B heterodimers. The octamer wraps approximately 147 bp of DNA. In terms of processing, not ubiquitinated. As to expression, strong expression through-out the roots and leaves. Also found in meristems and dividing cells.

The protein localises to the nucleus. It localises to the chromosome. Functionally, core component of nucleosome. Nucleosomes wrap and compact DNA into chromatin, limiting DNA accessibility to the cellular machineries which require DNA as a template. Histones thereby play a central role in transcription regulation, DNA repair, DNA replication and chromosomal stability. DNA accessibility is regulated via a complex set of post-translational modifications of histones, also called histone code, and nucleosome remodeling. The chain is Probable histone H2A.7 from Arabidopsis thaliana (Mouse-ear cress).